The primary structure comprises 504 residues: Maturase K (504 aa).

The protein belongs to the intron maturase 2 family. MatK subfamily.

The protein resides in the plastid. Its subcellular location is the chloroplast. Usually encoded in the trnK tRNA gene intron. Probably assists in splicing its own and other chloroplast group II introns. This chain is Maturase K, found in Ochroma pyramidale (Balsa).